The sequence spans 602 residues: ATP-dependent RNA helicase DeaD (602 aa).

The short motif at 6-34 is the Q motif element; the sequence is MTFSSFGLNSCIITALNDIGYVQPSPIQA. The Helicase ATP-binding domain maps to 37 to 208; that stretch reads IPYLIKGKDV…RRFMKNPKEI (172 aa). An ATP-binding site is contributed by 50-57; that stretch reads AQTGSGKT. Residues 156-159 carry the DEAD box motif; that stretch reads DEAD. Positions 231–378 constitute a Helicase C-terminal domain; it reads KTDALIRFLE…EVNLPKSDFL (148 aa).

This sequence belongs to the DEAD box helicase family. DeaD/CsdA subfamily.

Its subcellular location is the cytoplasm. It carries out the reaction ATP + H2O = ADP + phosphate + H(+). In terms of biological role, DEAD-box RNA helicase involved in various cellular processes at low temperature, including ribosome biogenesis, mRNA degradation and translation initiation. This Buchnera aphidicola subsp. Baizongia pistaciae (strain Bp) protein is ATP-dependent RNA helicase DeaD.